The primary structure comprises 473 residues: Ribulose bisphosphate carboxylase large chain (473 aa).

A propeptide spanning residues 1–2 (MS) is cleaved from the precursor. At P3 the chain carries N-acetylproline. N6,N6,N6-trimethyllysine is present on K14. Substrate-binding residues include N123 and T173. Catalysis depends on K175, which acts as the Proton acceptor. K177 provides a ligand contact to substrate. Mg(2+) is bound by residues K201, D203, and E204. K201 is modified (N6-carboxylysine). H294 acts as the Proton acceptor in catalysis. The substrate site is built by R295, H327, and S379.

This sequence belongs to the RuBisCO large chain family. Type I subfamily. As to quaternary structure, heterohexadecamer of 8 large chains and 8 small chains; disulfide-linked. The disulfide link is formed within the large subunit homodimers. It depends on Mg(2+) as a cofactor. Post-translationally, the disulfide bond which can form in the large chain dimeric partners within the hexadecamer appears to be associated with oxidative stress and protein turnover.

It localises to the plastid. The protein localises to the chloroplast. The catalysed reaction is 2 (2R)-3-phosphoglycerate + 2 H(+) = D-ribulose 1,5-bisphosphate + CO2 + H2O. It catalyses the reaction D-ribulose 1,5-bisphosphate + O2 = 2-phosphoglycolate + (2R)-3-phosphoglycerate + 2 H(+). Functionally, ruBisCO catalyzes two reactions: the carboxylation of D-ribulose 1,5-bisphosphate, the primary event in carbon dioxide fixation, as well as the oxidative fragmentation of the pentose substrate in the photorespiration process. Both reactions occur simultaneously and in competition at the same active site. The protein is Ribulose bisphosphate carboxylase large chain of Monarda didyma (Scarlet bee-balm).